We begin with the raw amino-acid sequence, 218 residues long: Serine/threonine-protein phosphatase 1 (218 aa).

4 residues coordinate Mn(2+): Asp24, His26, Asp53, and Asn79. His80 functions as the Proton donor in the catalytic mechanism. His187 lines the Mn(2+) pocket.

This sequence belongs to the PPP phosphatase family. PP-1 subfamily. Requires Mn(2+) as cofactor.

It carries out the reaction O-phospho-L-seryl-[protein] + H2O = L-seryl-[protein] + phosphate. It catalyses the reaction O-phospho-L-threonyl-[protein] + H2O = L-threonyl-[protein] + phosphate. Functionally, plays a key role in signaling protein misfolding via the CpxR/CPXA transducing system. It also modulates the phosphorylated status of many phosphoproteins in E.coli, some of which acting as major chaperones. Has been shown, in vitro, to act on Ser, Thr and Tyr-phosphorylated substrates. The polypeptide is Serine/threonine-protein phosphatase 1 (pphA) (Escherichia coli (strain K12)).